Consider the following 77-residue polypeptide: Cysteine-rich protein 1 (77 aa).

One can recognise an LIM zinc-binding domain in the interval 2–63; that stretch reads PKCPKCNKEV…HPCYAAMFGP (62 aa). 2 positions are modified to N6-acetyllysine: lysine 9 and lysine 22. Position 68 is an omega-N-methylarginine (arginine 68).

Functionally, seems to have a role in zinc absorption and may function as an intracellular zinc transport protein. This is Cysteine-rich protein 1 (CRIP1) from Homo sapiens (Human).